The chain runs to 77 residues: Large ribosomal subunit protein eL20 (77 aa).

This sequence belongs to the eukaryotic ribosomal protein eL20 family. As to quaternary structure, part of the 50S ribosomal subunit. Binds 23S rRNA.

The polypeptide is Large ribosomal subunit protein eL20 (Thermococcus kodakarensis (strain ATCC BAA-918 / JCM 12380 / KOD1) (Pyrococcus kodakaraensis (strain KOD1))).